Consider the following 412-residue polypeptide: Multifunctional CCA protein (412 aa).

ATP is bound by residues glycine 8 and arginine 11. Glycine 8 and arginine 11 together coordinate CTP. Mg(2+) contacts are provided by aspartate 21 and aspartate 23. ATP contacts are provided by arginine 91, arginine 137, and arginine 140. CTP is bound by residues arginine 91, arginine 137, and arginine 140. An HD domain is found at 225 to 326 (TGIHVMMVID…ADMLQATDAY (102 aa)).

Belongs to the tRNA nucleotidyltransferase/poly(A) polymerase family. Bacterial CCA-adding enzyme type 1 subfamily. Monomer. Can also form homodimers and oligomers. It depends on Mg(2+) as a cofactor. Ni(2+) is required as a cofactor.

It catalyses the reaction a tRNA precursor + 2 CTP + ATP = a tRNA with a 3' CCA end + 3 diphosphate. The catalysed reaction is a tRNA with a 3' CCA end + 2 CTP + ATP = a tRNA with a 3' CCACCA end + 3 diphosphate. Catalyzes the addition and repair of the essential 3'-terminal CCA sequence in tRNAs without using a nucleic acid template. Adds these three nucleotides in the order of C, C, and A to the tRNA nucleotide-73, using CTP and ATP as substrates and producing inorganic pyrophosphate. tRNA 3'-terminal CCA addition is required both for tRNA processing and repair. Also involved in tRNA surveillance by mediating tandem CCA addition to generate a CCACCA at the 3' terminus of unstable tRNAs. While stable tRNAs receive only 3'-terminal CCA, unstable tRNAs are marked with CCACCA and rapidly degraded. This is Multifunctional CCA protein from Nitrosomonas eutropha (strain DSM 101675 / C91 / Nm57).